The following is a 143-amino-acid chain: Large ribosomal subunit protein uL13 (143 aa).

The protein belongs to the universal ribosomal protein uL13 family. Part of the 50S ribosomal subunit.

Functionally, this protein is one of the early assembly proteins of the 50S ribosomal subunit, although it is not seen to bind rRNA by itself. It is important during the early stages of 50S assembly. In Albidiferax ferrireducens (strain ATCC BAA-621 / DSM 15236 / T118) (Rhodoferax ferrireducens), this protein is Large ribosomal subunit protein uL13.